A 212-amino-acid chain; its full sequence is Large ribosomal subunit protein uL4 (212 aa).

This sequence belongs to the universal ribosomal protein uL4 family. As to quaternary structure, part of the 50S ribosomal subunit.

Functionally, one of the primary rRNA binding proteins, this protein initially binds near the 5'-end of the 23S rRNA. It is important during the early stages of 50S assembly. It makes multiple contacts with different domains of the 23S rRNA in the assembled 50S subunit and ribosome. Its function is as follows. Forms part of the polypeptide exit tunnel. The sequence is that of Large ribosomal subunit protein uL4 from Phenylobacterium zucineum (strain HLK1).